Reading from the N-terminus, the 610-residue chain is DNA mismatch repair protein MutL (610 aa).

Belongs to the DNA mismatch repair MutL/HexB family.

Functionally, this protein is involved in the repair of mismatches in DNA. It is required for dam-dependent methyl-directed DNA mismatch repair. May act as a 'molecular matchmaker', a protein that promotes the formation of a stable complex between two or more DNA-binding proteins in an ATP-dependent manner without itself being part of a final effector complex. This Rickettsia conorii (strain ATCC VR-613 / Malish 7) protein is DNA mismatch repair protein MutL.